The following is a 396-amino-acid chain: Elongation factor Tu (396 aa).

One can recognise a tr-type G domain in the interval 10-205 (KSHANIGTIG…AVDEYIPTPE (196 aa)). Residues 19–26 (GHVDHGKT) are G1. Residue 19–26 (GHVDHGKT) participates in GTP binding. T26 contacts Mg(2+). The G2 stretch occupies residues 61–65 (GITIS). The G3 stretch occupies residues 82 to 85 (DCPG). Residues 82–86 (DCPGH) and 137–140 (NKCD) contribute to the GTP site. A G4 region spans residues 137–140 (NKCD). Residues 175–177 (SAL) form a G5 region.

Belongs to the TRAFAC class translation factor GTPase superfamily. Classic translation factor GTPase family. EF-Tu/EF-1A subfamily. Monomer.

The protein localises to the cytoplasm. The catalysed reaction is GTP + H2O = GDP + phosphate + H(+). Functionally, GTP hydrolase that promotes the GTP-dependent binding of aminoacyl-tRNA to the A-site of ribosomes during protein biosynthesis. This is Elongation factor Tu from Bacillus licheniformis (strain ATCC 14580 / DSM 13 / JCM 2505 / CCUG 7422 / NBRC 12200 / NCIMB 9375 / NCTC 10341 / NRRL NRS-1264 / Gibson 46).